The primary structure comprises 251 residues: Osmotin-like protein (251 aa).

The N-terminal stretch at 1-21 (MSHLTTFLVFFLLAFVTYTYA) is a signal peptide. 8 disulfides stabilise this stretch: cysteine 31/cysteine 226, cysteine 73/cysteine 83, cysteine 88/cysteine 94, cysteine 142/cysteine 214, cysteine 147/cysteine 197, cysteine 155/cysteine 165, cysteine 169/cysteine 178, and cysteine 179/cysteine 184. Asparagine 233 carries N-linked (GlcNAc...) asparagine glycosylation.

This sequence belongs to the thaumatin family.

In Nicotiana tabacum (Common tobacco), this protein is Osmotin-like protein (OLPA).